The chain runs to 298 residues: Lactose transport system permease protein LacF (298 aa).

6 helical membrane-spanning segments follow: residues 17-37, 77-97, 112-132, 151-171, 208-228, and 269-289; these read GWLFVAPAIALISVFMLYPIL, VIFFVVQVPIMITMALILAAM, MIFLPCVSSLVAYSILFKSMF, PIGWLTDPFWAKVLIIIAITW, AFLTIPMLKPVILFTTITSTI, and FSYAATVSYVIVLMVAVLSFL. The ABC transmembrane type-1 domain maps to 73 to 290; that stretch reads LQNTVIFFVV…LMVAVLSFLQ (218 aa).

Belongs to the binding-protein-dependent transport system permease family. MalFG subfamily.

The protein localises to the cell inner membrane. Functionally, part of the binding-protein-dependent transport system for lactose. Probably responsible for the translocation of the substrate across the membrane. In Rhizobium radiobacter (Agrobacterium tumefaciens), this protein is Lactose transport system permease protein LacF (lacF).